The following is a 199-amino-acid chain: Small ribosomal subunit protein mS38 (199 aa).

Belongs to the mitochondrion-specific ribosomal protein mS38 family. In terms of assembly, component of the mitochondrial small ribosomal subunit (mt-SSU). Mature mammalian 55S mitochondrial ribosomes consist of a small (28S) and a large (39S) subunit. The 28S small subunit contains a 12S ribosomal RNA (12S mt-rRNA) and 30 different proteins. The 39S large subunit contains a 16S rRNA (16S mt-rRNA), a copy of mitochondrial valine transfer RNA (mt-tRNA(Val)), which plays an integral structural role, and 52 different proteins. Interacts with Aurora-A. In terms of tissue distribution, ubiquitously expressed and especially highly expressed in heart, skeletal muscle and testis.

It localises to the mitochondrion matrix. Its subcellular location is the nucleus. May act as a negative regulator of Aurora-A kinase, by down-regulation through proteasome-dependent degradation. The sequence is that of Small ribosomal subunit protein mS38 (AURKAIP1) from Homo sapiens (Human).